The sequence spans 65 residues: Probable movement protein p8 (65 aa).

A compositionally biased stretch (polar residues) spans 1-10 (MENTENVRSG). The segment at 1 to 47 (MENTENVRSGRNQREYSKERQQEGGYKEVSKAAVRKEGDVKQDMGPS) is disordered. The span at 12–42 (NQREYSKERQQEGGYKEVSKAAVRKEGDVKQ) shows a compositional bias: basic and acidic residues.

The protein belongs to the carmovirus/necrovirus/panicovirus movement protein p8 family.

Functionally, cell-to-cell movement. The chain is Probable movement protein p8 from Tobacco necrosis virus (strain D) (TNV-D).